Reading from the N-terminus, the 1603-residue chain is Vitellogenin-5 (1603 aa).

The N-terminal stretch at 1-15 (MKSIIIASLVALAIA) is a signal peptide. The Vitellogenin domain maps to 24 to 685 (FSPKSEYVYK…EKNAFLPKEV (662 aa)). In terms of domain architecture, VWFD spans 1306–1475 (ATCKVDQSEV…SYLLKNEECE (170 aa)). 2 disulfide bridges follow: cysteine 1308–cysteine 1438 and cysteine 1330–cysteine 1474. The segment at 1492–1513 (NREEKKSDYESSSDYESNYDEK) is disordered.

In terms of processing, vitellogenin 5 undergoes little if any processing before being packaged into yolk platelets. In terms of tissue distribution, expressed in the intestine of adult hermaphrodites.

The protein resides in the secreted. Functionally, precursor of the egg-yolk proteins that are sources of nutrients during embryonic development. Together with other vitellogenins, may play a role in modulating life-span, acting via induction of autophagy and lysosomal lipolysis. This Caenorhabditis elegans protein is Vitellogenin-5 (vit-5).